Here is a 78-residue protein sequence, read N- to C-terminus: Neurogranin (78 aa).

M1 is subject to N-acetylmethionine. Residues 26–49 enclose the IQ domain; sequence ANAAAAKIQASFRGHMARKKIKSG. Position 36 is a phosphoserine; by PHK and PKC (S36). The disordered stretch occupies residues 38 to 78; sequence RGHMARKKIKSGERGRKGPGPGGPGGAGGARGGAGGGPSGD. The Collagen-like domain occupies 50–78; sequence ERGRKGPGPGGPGGAGGARGGAGGGPSGD. Positions 55–78 are enriched in gly residues; that stretch reads GPGPGGPGGAGGARGGAGGGPSGD. Citrulline; partial is present on R68. Omega-N-methylarginine is present on R68.

Belongs to the neurogranin family. Post-translationally, the N-terminus is blocked. In terms of processing, phosphorylated at Ser-36 by PHK and PKC. Phosphorylation prevents interaction with Calmodulin and interrupts several learning- and memory-associated functions. In terms of tissue distribution, is highly enriched in brain. Accumulates postsynaptically in dendritic spines of neostriatal neurons.

Acts as a 'third messenger' substrate of protein kinase C-mediated molecular cascades during synaptic development and remodeling. Binds to calmodulin in the absence of calcium. The sequence is that of Neurogranin (NRGN) from Bos taurus (Bovine).